The sequence spans 85 residues: U4-theraphotoxin-Hhn1s (85 aa).

The signal sequence occupies residues 1 to 22 (MKVTLIAILTCAAVLVLHTTAA). Residues 23 to 48 (EELEAESQLMEVGMPDTELAAVDEER) constitute a propeptide that is removed on maturation. 3 cysteine pairs are disulfide-bonded: cysteine 52–cysteine 66, cysteine 56–cysteine 77, and cysteine 71–cysteine 82.

The protein belongs to the neurotoxin 12 (Hwtx-2) family. 02 (Hwtx-2) subfamily. Expressed by the venom gland.

It localises to the secreted. Functionally, postsynaptic neurotoxin. The chain is U4-theraphotoxin-Hhn1s from Cyriopagopus hainanus (Chinese bird spider).